We begin with the raw amino-acid sequence, 277 residues long: Glutamate racemase (277 aa).

Substrate is bound by residues 25–26 (DS) and 57–58 (YG). Catalysis depends on Cys-89, which acts as the Proton donor/acceptor. A substrate-binding site is contributed by 90-91 (NT). The active-site Proton donor/acceptor is the Cys-204. Substrate is bound at residue 205-206 (TH).

It belongs to the aspartate/glutamate racemases family.

It carries out the reaction L-glutamate = D-glutamate. It functions in the pathway cell wall biogenesis; peptidoglycan biosynthesis. Provides the (R)-glutamate required for cell wall biosynthesis. This Brucella ovis (strain ATCC 25840 / 63/290 / NCTC 10512) protein is Glutamate racemase.